Consider the following 244-residue polypeptide: uncharacterized protein (244 aa).

In terms of domain architecture, HTH gntR-type spans V12–K80. The H-T-H motif DNA-binding region spans E40–A59.

This is an uncharacterized protein from Rhizobium meliloti (strain 1021) (Ensifer meliloti).